The chain runs to 92 residues: Small ribosomal subunit protein uS19 (92 aa).

This sequence belongs to the universal ribosomal protein uS19 family.

Functionally, protein S19 forms a complex with S13 that binds strongly to the 16S ribosomal RNA. In Bacillus cytotoxicus (strain DSM 22905 / CIP 110041 / 391-98 / NVH 391-98), this protein is Small ribosomal subunit protein uS19.